A 128-amino-acid chain; its full sequence is Saitohin (128 aa).

Positions 77-128 (SYSSEESSRNGAEQGRQLSIEGPFQGQNCPSHPAAALPLPMRGESQATSCQV) are disordered.

In terms of assembly, interacts with PRDX6. Highest expression in placenta, muscle, fetal brain, and adult brain, with lower expression in heart, kidney, stomach, testis, and adrenal gland. In the central nervous system, highest expression is in temporal lobe, hypothalamus, medulla and spinal cord, with lower expression in other brain regions.

It localises to the cytoplasm. It is found in the nucleus. The polypeptide is Saitohin (STH) (Homo sapiens (Human)).